The chain runs to 464 residues: Argininosuccinate lyase (464 aa).

It belongs to the lyase 1 family. Argininosuccinate lyase subfamily.

Its subcellular location is the cytoplasm. It carries out the reaction 2-(N(omega)-L-arginino)succinate = fumarate + L-arginine. The protein operates within amino-acid biosynthesis; L-arginine biosynthesis; L-arginine from L-ornithine and carbamoyl phosphate: step 3/3. The polypeptide is Argininosuccinate lyase (Pseudomonas aeruginosa (strain LESB58)).